The sequence spans 209 residues: Uracil phosphoribosyltransferase (209 aa).

5-phospho-alpha-D-ribose 1-diphosphate-binding positions include R79, R104, and 131–139 (DPMLATGNS). Uracil-binding positions include I194 and 199–201 (GDA). D200 provides a ligand contact to 5-phospho-alpha-D-ribose 1-diphosphate.

The protein belongs to the UPRTase family. It depends on Mg(2+) as a cofactor.

The enzyme catalyses UMP + diphosphate = 5-phospho-alpha-D-ribose 1-diphosphate + uracil. The protein operates within pyrimidine metabolism; UMP biosynthesis via salvage pathway; UMP from uracil: step 1/1. With respect to regulation, allosterically activated by GTP. Functionally, catalyzes the conversion of uracil and 5-phospho-alpha-D-ribose 1-diphosphate (PRPP) to UMP and diphosphate. The polypeptide is Uracil phosphoribosyltransferase (Rhizobium meliloti (strain 1021) (Ensifer meliloti)).